Consider the following 183-residue polypeptide: Large ribosomal subunit protein uL6 (183 aa).

The protein belongs to the universal ribosomal protein uL6 family. As to quaternary structure, part of the 50S ribosomal subunit.

Its function is as follows. This protein binds to the 23S rRNA, and is important in its secondary structure. It is located near the subunit interface in the base of the L7/L12 stalk, and near the tRNA binding site of the peptidyltransferase center. This is Large ribosomal subunit protein uL6 from Chlamydia abortus (strain DSM 27085 / S26/3) (Chlamydophila abortus).